Reading from the N-terminus, the 145-residue chain is D-aminoacyl-tRNA deacylase (145 aa).

Residues 137 to 138 (GP) carry the Gly-cisPro motif, important for rejection of L-amino acids motif.

Belongs to the DTD family. As to quaternary structure, homodimer.

It localises to the cytoplasm. It carries out the reaction glycyl-tRNA(Ala) + H2O = tRNA(Ala) + glycine + H(+). The catalysed reaction is a D-aminoacyl-tRNA + H2O = a tRNA + a D-alpha-amino acid + H(+). In terms of biological role, an aminoacyl-tRNA editing enzyme that deacylates mischarged D-aminoacyl-tRNAs. Also deacylates mischarged glycyl-tRNA(Ala), protecting cells against glycine mischarging by AlaRS. Acts via tRNA-based rather than protein-based catalysis; rejects L-amino acids rather than detecting D-amino acids in the active site. By recycling D-aminoacyl-tRNA to D-amino acids and free tRNA molecules, this enzyme counteracts the toxicity associated with the formation of D-aminoacyl-tRNA entities in vivo and helps enforce protein L-homochirality. This chain is D-aminoacyl-tRNA deacylase, found in Pseudomonas putida (strain W619).